We begin with the raw amino-acid sequence, 491 residues long: G2/mitotic-specific cyclin-A (491 aa).

The tract at residues 1-21 is disordered; it reads MASFQIHQDMSNKENPGIKIP. The Cyclin N-terminal domain maps to 206–332; it reads DILEYFRESE…ILKILSFDLC (127 aa).

Belongs to the cyclin family. Cyclin AB subfamily. In terms of assembly, component of the Frs-CycA-Cdk1 complex composed of CycA, Cdk1 and Z600. Interacts (via C-terminus) with Z600. Interacts with otu and (via C-terminus) with bam; the interaction stabilizes CycA by negatively regulating its ubiquitination. In terms of processing, ubiquitinated. Ubiquitination state is negatively regulated by a deubiquitinase complex made up of bam and otu.

Its function is as follows. Essential for the control of the cell cycle at the G2/M (mitosis) transition. Interacts with the Cdk1 and Cdk2 protein kinases to form MPF. G2/M cyclins accumulate steadily during G2 and are abruptly destroyed at mitosis. This Drosophila melanogaster (Fruit fly) protein is G2/mitotic-specific cyclin-A (CycA).